Reading from the N-terminus, the 120-residue chain is Large ribosomal subunit protein bL20 (120 aa).

Belongs to the bacterial ribosomal protein bL20 family.

Binds directly to 23S ribosomal RNA and is necessary for the in vitro assembly process of the 50S ribosomal subunit. It is not involved in the protein synthesizing functions of that subunit. The polypeptide is Large ribosomal subunit protein bL20 (Desulfitobacterium hafniense (strain DSM 10664 / DCB-2)).